Here is a 636-residue protein sequence, read N- to C-terminus: Polyadenylate-binding protein 1 (636 aa).

Residue Met1 is modified to N-acetylmethionine. 4 consecutive RRM domains span residues 11–89 (ASLY…WSQR), 99–175 (GNIF…RFKS), 191–268 (TNVY…RAQK), and 294–370 (VNLY…LAQR). A UNR-binding region spans residues 166–289 (RKVFVGRFKS…FEQMKQDRIT (124 aa)). Lys299 bears the N6-methyllysine mark. Ser315 carries the post-translational modification Phosphoserine. At Thr319 the chain carries Phosphothreonine. An omega-N-methylarginine mark is found at Arg385, Arg419, Arg432, and Arg436. Residues Arg455 and Arg460 each carry the omega-N-methylated arginine; by CARM1 modification. Arg475 and Arg481 each carry omega-N-methylarginine. An Asymmetric dimethylarginine; alternate modification is found at Arg493. Arg493 is subject to Dimethylated arginine; alternate. The residue at position 493 (Arg493) is an Omega-N-methylarginine; alternate. Omega-N-methylarginine is present on Arg506. Residue Lys512 is modified to N6-acetyllysine. Arg518 carries the post-translational modification Omega-N-methylarginine. Positions 542–619 (QEPLTASMLA…AVAVLQAHQA (78 aa)) constitute a PABC domain.

Belongs to the polyadenylate-binding protein type-1 family. May form homodimers. Component of a multisubunit autoregulatory ribonucleoprotein complex (ARC), at least composed of IGF2BP1, PABPC1 and CSDE1. Directly interacts with IGF2BP1. Part of a complex associated with the FOS mCRD domain and consisting of HNRPD, SYNCRIP, PAIP1 and CSDE1/UNR. Interacts with PAIP1 and PAIP2 (via the PABPC1-interacting motifs PAM1 and PAM2). Interacts with PAIP1 with a 1:1 stoichiometry and with PAIP2 with a 1:2 stoichiometry. The interaction with CSDE1 is direct and RNA-independent. Found in a mRNP complex with YBX2. Interacts with TENT2/GLD2. Identified in the spliceosome C complex. Identified in a mRNP complex, at least composed of DHX9, DDX3X, ELAVL1, HNRNPU, IGF2BP1, ILF3, PABPC1, PCBP2, PTBP2, STAU1, STAU2, SYNCRIP and YBX1. The interaction with DDX3X is direct and RNA-independent. This interaction increases in stressed cells and decreases during cell recovery. Identified in a IGF2BP1-dependent mRNP granule complex containing untranslated mRNAs. Interacts with NXF1/TAP. Interacts with PIWIL1. Interacts with AGO1, AGO2, GSPT1 and GSPT2. Interacts with LARP4B. Interacts (via the second and third RRM domains and the C-terminus) with PAIP2B (via central acidic portion and C-terminus). Forms a complex with LARP1 and SHFL. Interacts with LARP4. Interacts with ZFC3H1 in a RNase-sensitive manner. Interacts with TRIM71 (via NHL repeats) in an RNA-dependent manner. Interacts with TENT5C; the interaction has no effect on TENT5C poly(A) polymerase function. Interacts with G3BP1 and G3BP2. Interacts with ENDOV; the interaction is RNA-dependent and stimulates ENDOV activity. Interacts with UPF1; the interaction is RNA-dependent. Interacts with IGF2BP2 and IGF2BP3. May interact with SETX. Interacts with RBM46. Interacts with PAN3 isoform 1/Pan3L and isoform 3/Pan3S (via N-terminus); interaction with isoform 1 is less efficient than with isoform 3. In terms of processing, phosphorylated by MAPKAPK2. Methylated by CARM1. Arg-493 is dimethylated, probably to asymmetric dimethylarginine.

It localises to the cytoplasm. The protein localises to the stress granule. Its subcellular location is the nucleus. The protein resides in the cell projection. It is found in the lamellipodium. Its function is as follows. Binds the poly(A) tail of mRNA, including that of its own transcript, and regulates processes of mRNA metabolism such as pre-mRNA splicing and mRNA stability. Its function in translational initiation regulation can either be enhanced by PAIP1 or repressed by PAIP2. Can probably bind to cytoplasmic RNA sequences other than poly(A) in vivo. Binds to N6-methyladenosine (m6A)-containing mRNAs and contributes to MYC stability by binding to m6A-containing MYC mRNAs. Involved in translationally coupled mRNA turnover. Implicated with other RNA-binding proteins in the cytoplasmic deadenylation/translational and decay interplay of the FOS mRNA mediated by the major coding-region determinant of instability (mCRD) domain. Involved in regulation of nonsense-mediated decay (NMD) of mRNAs containing premature stop codons; for the recognition of premature termination codons (PTC) and initiation of NMD a competitive interaction between UPF1 and PABPC1 with the ribosome-bound release factors is proposed. By binding to long poly(A) tails, may protect them from uridylation by ZCCHC6/ZCCHC11 and hence contribute to mRNA stability. The protein is Polyadenylate-binding protein 1 (Pabpc1) of Rattus norvegicus (Rat).